A 102-amino-acid chain; its full sequence is Glutaredoxin 1 (102 aa).

The Glutaredoxin domain maps to 1–96; that stretch reads MNKAILHTII…KLLENQPKTT (96 aa). A disulfide bridge connects residues Cys-17 and Cys-20.

This sequence belongs to the glutaredoxin family. As to quaternary structure, monomer.

The protein localises to the cytoplasm. Its function is as follows. Has a glutathione-disulfide oxidoreductase activity in the presence of NADPH and glutathione reductase. Reduces low molecular weight disulfides and proteins. The sequence is that of Glutaredoxin 1 (grxC1) from Rickettsia conorii (strain ATCC VR-613 / Malish 7).